Reading from the N-terminus, the 165-residue chain is Sporulation-specific cell division protein SsgB (165 aa).

Positions methionine 1–glutamate 21 are disordered.

Belongs to the SsgA family. Interacts with SsgA. Interacts with FtsZ (via N-terminus).

The protein localises to the cell septum. Its function is as follows. Involved in sporulation-specific cell division. Required for early stages of sporulation. Important in the process of growth cessation prior to sporulation-specific cell division. Recruits cell division protein FtsZ to the future septum sites and tethers the contractile ring structure (Z ring) to the cytoplasmic membrane during sporulation. Stimulates polymerization and filament length of FtsZ in vitro. The protein is Sporulation-specific cell division protein SsgB of Kineococcus radiotolerans (strain ATCC BAA-149 / DSM 14245 / SRS30216).